A 206-amino-acid polypeptide reads, in one-letter code: Transmembrane 4 L6 family member 19 (206 aa).

Over 1 to 16 (MLSFSRVVNCSRTCSR) the chain is Cytoplasmic. Residues 17–37 (FLGLSLGTASLCAAGANIALL) form a helical membrane-spanning segment. At 38–54 (FPNWDVTYLMRGLIGKH) the chain is on the extracellular side. Residues 55 to 75 (AMLGSGLWGGGLMVLLAATLI) traverse the membrane as a helical segment. At 76 to 89 (SMTGSFSKSAPCLQ) the chain is on the cytoplasmic side. A helical membrane pass occupies residues 90-110 (VLIALLSSGLALLGAVICFVT). Residues 111 to 171 (SGVALKDGPF…PSKAVVWHVA (61 aa)) are Extracellular-facing. Asparagine 129 carries an N-linked (GlcNAc...) asparagine glycan. The chain crosses the membrane as a helical span at residues 172-192 (FFSILLCISLLQLLLVAIHLV). The segment at 182–192 (LQLLLVAIHLV) is important for homodimerization. Over 193–206 (NSILGLFCSFCEKH) the chain is Cytoplasmic.

It belongs to the L6 tetraspanin family. In terms of assembly, may form homodimers and homooligomers. Interacts with integrins ITGAV and ITGB3. Interacts with components of members of the V0 complex of vacuolar(H+)-ATPase (V-ATPase), including ATP6V0B and ATP6V0D2; this interaction inhibits V1-V0 complex assembly. As to expression, predominantly expressed in osteoclasts (at protein level). Also expressed in white adipose tissue, as well as in bone marrow-derived macrophages.

The protein resides in the lysosome membrane. The protein localises to the cytoplasm. Its subcellular location is the cytoskeleton. It localises to the cell projection. It is found in the filopodium. Its function is as follows. Negatively regulates vacuolar (H+)-ATPase (V-ATPase) activity by interacting with members of V-ATPase V0 complex and hence inhibiting V1-V0 assembly. Required for multinucleation during osteoclast differentiation. In Mus musculus (Mouse), this protein is Transmembrane 4 L6 family member 19 (Tm4sf19).